The chain runs to 222 residues: Sigma non-opioid intracellular receptor 1 (222 aa).

Residues 1–7 are Lumenal-facing; it reads MGVAGPW. The helical transmembrane segment at 8–29 threads the bilayer; it reads VLRVGLGLGAFALLLQGLRGWL. Residues 30–222 lie on the Cytoplasmic side of the membrane; that stretch reads ACKRYEFQPA…ASAFFSTLGC (193 aa). An important for ligand-binding region spans residues 98 to 105; the sequence is SLTEYVLL. A C-terminal hydrophobic region region spans residues 176–222; it reads FVPSTLAFALADTLFSTQDFITLFYTLRAYTKGLLLEASAFFSTLGC.

Belongs to the ERG2 family. As to quaternary structure, homotrimer.

Its subcellular location is the nucleus inner membrane. The protein localises to the nucleus outer membrane. It localises to the nucleus envelope. It is found in the cytoplasmic vesicle. The protein resides in the endoplasmic reticulum membrane. Its subcellular location is the membrane. May function in lipid transport from the endoplasmic reticulum and be involved in a wide array of cellular functions probably through regulation of the biogenesis of lipid microdomains at the plasma membrane. May regulate calcium efflux at the endoplasmic reticulum. The chain is Sigma non-opioid intracellular receptor 1 (SIGMAR1) from Gallus gallus (Chicken).